A 307-amino-acid chain; its full sequence is MATTSTTTKLSVLCCSFISSPLVDSPPSLAFFSPIPRFLTVRIATSFRSSSRFPATKIRKSSLAAVMFPENSVLSDVCAFGVTSIVAFSCLGFWGEIGKRGIFDQKLIRKLVHINIGLVFMLCWPLFSSGIQGALFASLVPGLNIVRMLLLGLGVYHDEGTIKSMSRHGDRRELLKGPLYYVLSITSACIYYWKSSPIAIAVICNLCAGDGMADIVGRRFGTEKLPYNKNKSFAGSIGMATAGFLASVAYMYYFASFGYIEDSGGMILRFLVISIASALVESLPISTDIDDNLTISLTSALAGFLLF.

The N-terminal 65 residues, 1 to 65 (MATTSTTTKL…TKIRKSSLAA (65 aa)), are a transit peptide targeting the chloroplast. The next 7 membrane-spanning stretches (helical) occupy residues 77–97 (VCAF…WGEI), 116–136 (IGLV…GALF), 137–157 (ASLV…GVYH), 177–194 (GPLY…YYWK), 197–217 (PIAI…DIVG), 237–257 (IGMA…FASF), and 265–285 (GMIL…SLPI).

This sequence belongs to the polyprenol kinase family.

The protein resides in the plastid. Its subcellular location is the chloroplast membrane. The enzyme catalyses (2E,6E)-farnesol + CTP = (2E,6E)-farnesyl phosphate + CDP + H(+). The catalysed reaction is (2E,6E)-farnesol + ATP = (2E,6E)-farnesyl phosphate + ADP + H(+). It catalyses the reaction (2E)-geraniol + ATP = (2E)-geranyl phosphate + ADP + H(+). It carries out the reaction (2E,6E,10E)-geranylgeraniol + ATP = (2E,6E,10E)-geranylgeranyl phosphate + ADP + H(+). In terms of biological role, kinase involved in negative regulation of abscisic acid (ABA) signaling. Substrate preference is farnesol &gt; geraniol &gt; geranylgeraniol, but has no activity with farnesyl phosphate. Can use CTP &gt; ATP &gt; GTP = UTP as phosphoryl donor. The protein is Farnesol kinase, chloroplastic of Arabidopsis thaliana (Mouse-ear cress).